The sequence spans 512 residues: Maturase K (512 aa).

It belongs to the intron maturase 2 family. MatK subfamily.

The protein localises to the plastid. It localises to the chloroplast. Its function is as follows. Usually encoded in the trnK tRNA gene intron. Probably assists in splicing its own and other chloroplast group II introns. The polypeptide is Maturase K (Daucus carota (Wild carrot)).